A 312-amino-acid polypeptide reads, in one-letter code: Ribosomal RNA small subunit methyltransferase H (312 aa).

S-adenosyl-L-methionine is bound by residues 33-35, Asp52, Phe81, Asp102, and Gln109; that span reads GGH.

It belongs to the methyltransferase superfamily. RsmH family.

Its subcellular location is the cytoplasm. It catalyses the reaction cytidine(1402) in 16S rRNA + S-adenosyl-L-methionine = N(4)-methylcytidine(1402) in 16S rRNA + S-adenosyl-L-homocysteine + H(+). Functionally, specifically methylates the N4 position of cytidine in position 1402 (C1402) of 16S rRNA. The polypeptide is Ribosomal RNA small subunit methyltransferase H (Leuconostoc mesenteroides subsp. mesenteroides (strain ATCC 8293 / DSM 20343 / BCRC 11652 / CCM 1803 / JCM 6124 / NCDO 523 / NBRC 100496 / NCIMB 8023 / NCTC 12954 / NRRL B-1118 / 37Y)).